The sequence spans 662 residues: Protein Aster-C (662 aa).

The interval 1–34 is disordered; that stretch reads MEGAPTVRQVMNEGDSSLATDLQEDVEENPSPTV. One can recognise a GRAM domain in the interval 69–136; it reads EEYRRQFTHL…KNITFMTKEK (68 aa). Disordered regions lie at residues 212 to 237 and 249 to 284; these read SIED…EKLS and RVSE…LPTL. The segment covering 265–276 has biased composition (basic and acidic residues); that stretch reads LGKEESQNEKQT. Residues 326 to 497 form the VASt domain; the sequence is HGRLFINRIF…DLLIEESVLN (172 aa). Residues 557–577 traverse the membrane as a helical segment; it reads LIVVMSIFVLLLVLLNVTLFL.

Its subcellular location is the endoplasmic reticulum membrane. The protein resides in the cell membrane. Its function is as follows. Cholesterol transporter that mediates non-vesicular transport of cholesterol from the plasma membrane (PM) to the endoplasmic reticulum (ER). Contains unique domains for binding cholesterol and the PM, thereby serving as a molecular bridge for the transfer of cholesterol from the PM to the ER. Plays a crucial role in cholesterol homeostasis and has the unique ability to localize to the PM based on the level of membrane cholesterol. In lipid-poor conditions localizes to the ER membrane and in response to excess cholesterol in the PM is recruited to the endoplasmic reticulum-plasma membrane contact sites (EPCS) which is mediated by the GRAM domain. At the EPCS, the sterol-binding VASt/ASTER domain binds to the cholesterol in the PM and facilitates its transfer from the PM to ER. In Homo sapiens (Human), this protein is Protein Aster-C (GRAMD1C).